Consider the following 582-residue polypeptide: Fructose-1,6-bisphosphatase class 3 (582 aa).

This sequence belongs to the FBPase class 3 family. Mn(2+) serves as cofactor.

It catalyses the reaction beta-D-fructose 1,6-bisphosphate + H2O = beta-D-fructose 6-phosphate + phosphate. It functions in the pathway carbohydrate biosynthesis; gluconeogenesis. The polypeptide is Fructose-1,6-bisphosphatase class 3 (Saccharophagus degradans (strain 2-40 / ATCC 43961 / DSM 17024)).